A 179-amino-acid polypeptide reads, in one-letter code: ATP synthase subunit delta (179 aa).

This sequence belongs to the ATPase delta chain family. In terms of assembly, F-type ATPases have 2 components, F(1) - the catalytic core - and F(0) - the membrane proton channel. F(1) has five subunits: alpha(3), beta(3), gamma(1), delta(1), epsilon(1). F(0) has three main subunits: a(1), b(2) and c(10-14). The alpha and beta chains form an alternating ring which encloses part of the gamma chain. F(1) is attached to F(0) by a central stalk formed by the gamma and epsilon chains, while a peripheral stalk is formed by the delta and b chains.

The protein resides in the cell membrane. Its function is as follows. F(1)F(0) ATP synthase produces ATP from ADP in the presence of a proton or sodium gradient. F-type ATPases consist of two structural domains, F(1) containing the extramembraneous catalytic core and F(0) containing the membrane proton channel, linked together by a central stalk and a peripheral stalk. During catalysis, ATP synthesis in the catalytic domain of F(1) is coupled via a rotary mechanism of the central stalk subunits to proton translocation. In terms of biological role, this protein is part of the stalk that links CF(0) to CF(1). It either transmits conformational changes from CF(0) to CF(1) or is implicated in proton conduction. The sequence is that of ATP synthase subunit delta from Staphylococcus aureus (strain USA300 / TCH1516).